Consider the following 301-residue polypeptide: Probable alpha-L-glutamate ligase (301 aa).

The ATP-grasp domain occupies 104–287 (LQLLSRKGIG…VADEIIRFIE (184 aa)). ATP contacts are provided by residues Lys-141, 178–179 (EF), Asp-187, and 211–213 (RSN). Residues Asp-248, Glu-260, and Asn-262 each coordinate Mg(2+). Positions 248, 260, and 262 each coordinate Mn(2+).

The protein belongs to the RimK family. It depends on Mg(2+) as a cofactor. The cofactor is Mn(2+).

In Syntrophotalea carbinolica (strain DSM 2380 / NBRC 103641 / GraBd1) (Pelobacter carbinolicus), this protein is Probable alpha-L-glutamate ligase.